The primary structure comprises 541 residues: Chaperonin GroEL (541 aa).

ATP contacts are provided by residues 29-32, 86-90, Gly413, 476-478, and Asp492; these read TLGP, DGTTT, and NAA.

This sequence belongs to the chaperonin (HSP60) family. In terms of assembly, forms a cylinder of 14 subunits composed of two heptameric rings stacked back-to-back. Interacts with the co-chaperonin GroES.

It localises to the cytoplasm. It catalyses the reaction ATP + H2O + a folded polypeptide = ADP + phosphate + an unfolded polypeptide.. In terms of biological role, together with its co-chaperonin GroES, plays an essential role in assisting protein folding. The GroEL-GroES system forms a nano-cage that allows encapsulation of the non-native substrate proteins and provides a physical environment optimized to promote and accelerate protein folding. This chain is Chaperonin GroEL, found in Streptococcus equi subsp. zooepidemicus (strain H70).